The following is a 341-amino-acid chain: Cell wall mannoprotein PIR1 (341 aa).

Positions 1-18 (MQYKKSLVASALVTTSLA) are cleaved as a signal peptide. Positions 19–63 (AYAPKDPWSTLTPSATYKGGITDYSSTFGIAVEPIATTASSKAKR) are excised as a propeptide. 8 PIR1/2/3 repeats span residues 64–82 (AAAISQIGDGQIQATTKTT), 83–101 (AAAVSQIGDGQIQATTKTK), 102–120 (AAAVSQIGDGQIQATTKTT), 126–144 (AAAVSQIGDGQIQATTKTK), 145–163 (AAAVSQIGDGQIQATTKTT), 164–182 (AAAVSQIGDGQIQATTKTT), 183–201 (AAAVSQIGDGQIQATTNTT), and 202–220 (VAPVSQITDGQIQATTLTS).

This sequence belongs to the PIR protein family. In terms of processing, covalently linked to beta-1,3-glucan of the inner cell wall layer via an alkali-sensitive ester linkage between the gamma-carboxyl group of glutamic acids, arising from specific glutamines within the PIR1/2/3 repeats, and hydroxyl groups of glucoses of beta-1,3-glucan chains. O-glycosylated. Extensively O-mannosylated.

It localises to the secreted. It is found in the cell wall. In terms of biological role, component of the outer cell wall layer. Required for stability of the cell wall and for optimal growth. Required for resistance against several antifungal and cell wall-perturbing agents and for tolerance to heat shock. This chain is Cell wall mannoprotein PIR1 (PIR1), found in Saccharomyces cerevisiae (strain RM11-1a) (Baker's yeast).